We begin with the raw amino-acid sequence, 96 residues long: MCHTSCSPACQPTCCIHSPCQASCYVPVSCQSSVCMPVSCTRIVCVAPSCQPSVCVPVSCRPIIYVTPSCQSSGCCQPPCTTALCRPISCSTPSCC.

14 repeat units span residues Cys-10–Cys-14, Cys-15–Pro-19, Cys-24–Val-28, Cys-30–Val-34, Cys-35–Ser-39, Cys-45–Ser-49, Cys-50–Val-54, Cys-55–Ser-59, Cys-60–Ile-64, Cys-70–Gly-74, Cys-75–Pro-79, Cys-80–Leu-84, Cys-85–Ser-89, and Cys-90–Ser-94. A 14 X 5 AA approximate repeats region spans residues Cys-10 to Ser-94.

This sequence belongs to the KRTAP type 12 family. In terms of assembly, interacts with hair keratins. Restricted to a narrow region of the hair fiber cuticle, lying approximately 20 cell layers above the apex of the dermal papilla of the hair root; not detected in any other tissues.

In the hair cortex, hair keratin intermediate filaments are embedded in an interfilamentous matrix, consisting of hair keratin-associated proteins (KRTAP), which are essential for the formation of a rigid and resistant hair shaft through their extensive disulfide bond cross-linking with abundant cysteine residues of hair keratins. The matrix proteins include the high-sulfur and high-glycine-tyrosine keratins. The sequence is that of Keratin-associated protein 12-3 (KRTAP12-3) from Homo sapiens (Human).